Consider the following 96-residue polypeptide: uncharacterized protein (96 aa).

The tract at residues Ser35–Lys96 is disordered. A compositionally biased stretch (basic and acidic residues) spans Gly38–Lys52. Positions Ala69 to Leu80 are enriched in polar residues.

This is an uncharacterized protein from Dictyostelium discoideum (Social amoeba).